We begin with the raw amino-acid sequence, 380 residues long: Cytochrome b (380 aa).

4 consecutive transmembrane segments (helical) span residues 34 to 54 (FGSLLGICLLTQILTGLLLAA), 78 to 99 (WLLRNLHANGASFFFICIYLHI), 114 to 134 (WNTGVVLLLTLMATAFVGYVL), and 179 to 199 (FFALHFLLPFMIAGLTLIHLT). The heme b site is built by His-84 and His-98. Residues His-183 and His-197 each contribute to the heme b site. Residue His-202 coordinates a ubiquinone. 4 helical membrane passes run 227–247 (LKDILGFMIMLLLLTTLALFH), 289–309 (LGGVLALAASVLILFLIPFLH), 321–341 (LSQLLFWLLVSNLFILTWIGS), and 348–368 (FIIIGQLASTTYFTIILVLFP).

Belongs to the cytochrome b family. As to quaternary structure, the cytochrome bc1 complex contains 11 subunits: 3 respiratory subunits (MT-CYB, CYC1 and UQCRFS1), 2 core proteins (UQCRC1 and UQCRC2) and 6 low-molecular weight proteins (UQCRH/QCR6, UQCRB/QCR7, UQCRQ/QCR8, UQCR10/QCR9, UQCR11/QCR10 and a cleavage product of UQCRFS1). This cytochrome bc1 complex then forms a dimer. Heme b is required as a cofactor.

It is found in the mitochondrion inner membrane. Component of the ubiquinol-cytochrome c reductase complex (complex III or cytochrome b-c1 complex) that is part of the mitochondrial respiratory chain. The b-c1 complex mediates electron transfer from ubiquinol to cytochrome c. Contributes to the generation of a proton gradient across the mitochondrial membrane that is then used for ATP synthesis. In Trogon curucui (Blue-crowned trogon), this protein is Cytochrome b (MT-CYB).